We begin with the raw amino-acid sequence, 316 residues long: BRCA2 and CDKN1A-interacting protein (316 aa).

Residues 1 to 57 (MASKAKKRAVGNGIQRPLGAPGQREEEEEEEDEVEDEEEDEDDSDEEEDEVDEIVDE) are disordered. Over residues 25-57 (EEEEEEEDEVEDEEEDEDDSDEEEDEVDEIVDE) the composition is skewed to acidic residues. Phosphoserine is present on residues Ser-44 and Ser-114. The interaction with BRCA2 stretch occupies residues 61-169 (IEFEAYSISD…EQSMVEQLDK (109 aa)). An interaction with CDKN1A region spans residues 163-261 (MVEQLDKLLN…NAEEEFFYEK (99 aa)). Ser-283 carries the post-translational modification Phosphoserine.

This sequence belongs to the BCP1 family. Interacts with BRCA2, CDKN1A and MTDH/LYRIC. Interacts with DCTN1/p150-glued and ACTR1A/ARP1. Interacts with alpha-, beta- and gamma-tubulins. Interacts with TENT5C; the interaction has no effect on TENT5C poly(A) polymerase function. As to expression, expressed in the testes (at protein level).

It is found in the nucleus. It localises to the cytoplasm. Its subcellular location is the cytoskeleton. The protein resides in the microtubule organizing center. The protein localises to the centrosome. It is found in the centriole. It localises to the spindle pole. Its function is as follows. During interphase, required for microtubule organizing and anchoring activities. During mitosis, required for the organization and stabilization of the spindle pole. May promote cell cycle arrest by enhancing the inhibition of CDK2 activity by CDKN1A. May be required for repair of DNA damage by homologous recombination in conjunction with BRCA2. May not be involved in non-homologous end joining (NHEJ). The sequence is that of BRCA2 and CDKN1A-interacting protein (Bccip) from Mus musculus (Mouse).